We begin with the raw amino-acid sequence, 430 residues long: MKQAFRLMVGLLVLWASVLHAEVRIVITQGVDSARPIGVVPFKWMGPGTAPENIGGIIAADLRNSGKFNPIDASRMPQQPSAAAEVSPAAWTALGIDAVVVGQVQPGADGSYLVSYQLVDTSGNPGSVLVQNQYKVTGQWLRYAAHTASDEVFEKLTGIKGAFRTRIAYVVQTNGGQFPYELRVADYDGYNQFVVHRSAEPLMSPAWSPDGSKLAYVTFESGRSALVIQTLSNGAIRQVASFPRHNGSPAFSPDGSKLAFALSKTGSLNLYVMDLASGAIRQVTDGRSNNTEPTWFPDSQNLAFTSDQAGRPQIYKMNINGGVAQRLTWEGSQNQDAEVSPDGKFLVMVSSSAGAQHIAKLDLGTNATQVLTDTFLDETPSIAPNGTMVIYSSTQGLGSVLQLVSIDGRFKARLPATDGQVKFPAWSPYL.

The signal sequence occupies residues 1–21 (MKQAFRLMVGLLVLWASVLHA).

It belongs to the TolB family. In terms of assembly, the Tol-Pal system is composed of five core proteins: the inner membrane proteins TolA, TolQ and TolR, the periplasmic protein TolB and the outer membrane protein Pal. They form a network linking the inner and outer membranes and the peptidoglycan layer.

It is found in the periplasm. In terms of biological role, part of the Tol-Pal system, which plays a role in outer membrane invagination during cell division and is important for maintaining outer membrane integrity. TolB occupies a key intermediary position in the Tol-Pal system because it communicates directly with both membrane-embedded components, Pal in the outer membrane and TolA in the inner membrane. The sequence is that of Tol-Pal system protein TolB from Edwardsiella ictaluri (strain 93-146).